We begin with the raw amino-acid sequence, 314 residues long: Glycerol-3-phosphate dehydrogenase [NAD(P)+] (314 aa).

The NADPH site is built by Phe-11, Arg-30, and Lys-96. 3 residues coordinate sn-glycerol 3-phosphate: Lys-96, Gly-124, and Ser-126. Residue Ala-128 coordinates NADPH. The sn-glycerol 3-phosphate site is built by Lys-179, Asp-232, Ser-242, Arg-243, and Asn-244. Lys-179 functions as the Proton acceptor in the catalytic mechanism. An NADPH-binding site is contributed by Arg-243. Residue Glu-264 participates in NADPH binding.

The protein belongs to the NAD-dependent glycerol-3-phosphate dehydrogenase family.

The protein resides in the cytoplasm. The catalysed reaction is sn-glycerol 3-phosphate + NAD(+) = dihydroxyacetone phosphate + NADH + H(+). It carries out the reaction sn-glycerol 3-phosphate + NADP(+) = dihydroxyacetone phosphate + NADPH + H(+). It participates in membrane lipid metabolism; glycerophospholipid metabolism. Its function is as follows. Catalyzes the reduction of the glycolytic intermediate dihydroxyacetone phosphate (DHAP) to sn-glycerol 3-phosphate (G3P), the key precursor for phospholipid synthesis. The sequence is that of Glycerol-3-phosphate dehydrogenase [NAD(P)+] from Paracoccus denitrificans (strain Pd 1222).